The chain runs to 104 residues: Putative ankyrin repeat protein L677 (104 aa).

ANK repeat units lie at residues 16–43, 44–73, and 75–102; these read FNKSSLEIACIENDIGTVKKIINLNPNL, DISHCLNLAIESKNYQIVKFLLKKNISNSV, and LEAYDCACINGKISIMELLIQYLNNKSI.

This chain is Putative ankyrin repeat protein L677, found in Acanthamoeba polyphaga (Amoeba).